The sequence spans 494 residues: Glycerol kinase (494 aa).

Thr-12 contacts ADP. Positions 12, 13, and 14 each coordinate ATP. Residue Thr-12 participates in sn-glycerol 3-phosphate binding. Arg-16 lines the ADP pocket. Positions 82, 83, 134, and 241 each coordinate sn-glycerol 3-phosphate. Residues Arg-82, Glu-83, Tyr-134, Asp-241, and Gln-242 each coordinate glycerol. Residues Thr-263 and Gly-306 each contribute to the ADP site. The ATP site is built by Thr-263, Gly-306, Gln-310, and Gly-407. Gly-407 is a binding site for ADP.

It belongs to the FGGY kinase family.

It catalyses the reaction glycerol + ATP = sn-glycerol 3-phosphate + ADP + H(+). The protein operates within polyol metabolism; glycerol degradation via glycerol kinase pathway; sn-glycerol 3-phosphate from glycerol: step 1/1. Its activity is regulated as follows. Inhibited by fructose 1,6-bisphosphate (FBP). Functionally, key enzyme in the regulation of glycerol uptake and metabolism. Catalyzes the phosphorylation of glycerol to yield sn-glycerol 3-phosphate. This is Glycerol kinase from Brachyspira hyodysenteriae (strain ATCC 49526 / WA1).